We begin with the raw amino-acid sequence, 74 residues long: MPKYYEDKPQGGACAGLKEDLGACLLQSDCVVQEGKSPRQCLKEGYCNSLKYAFFECKRSVLDNRARFRGRKGY.

In terms of domain architecture, CHCH spans 27–65 (QSDCVVQEGKSPRQCLKEGYCNSLKYAFFECKRSVLDNR). The short motif at 30 to 41 (CVVQEGKSPRQC) is the Cx10C motif element. 2 disulfide bridges follow: C30–C57 and C41–C47. The residue at position 37 (S37) is a Phosphoserine. Residues 47-57 (CNSLKYAFFEC) carry the Cx9C motif motif.

Belongs to the PET191 family.

In terms of biological role, involved in an early step of the mitochondrial complex IV assembly process. The chain is Cytochrome c oxidase assembly factor 5 (COA5) from Homo sapiens (Human).